A 1188-amino-acid polypeptide reads, in one-letter code: DNA-directed RNA polymerase subunit beta (1188 aa).

It belongs to the RNA polymerase beta chain family. In terms of assembly, the RNAP catalytic core consists of 2 alpha, 1 beta, 1 beta' and 1 omega subunit. When a sigma factor is associated with the core the holoenzyme is formed, which can initiate transcription.

The enzyme catalyses RNA(n) + a ribonucleoside 5'-triphosphate = RNA(n+1) + diphosphate. Functionally, DNA-dependent RNA polymerase catalyzes the transcription of DNA into RNA using the four ribonucleoside triphosphates as substrates. The sequence is that of DNA-directed RNA polymerase subunit beta from Streptococcus equi subsp. equi (strain 4047).